The sequence spans 244 residues: Carboxy-S-adenosyl-L-methionine synthase (244 aa).

Residues Tyr40, 65-67 (GCS), 90-91 (DN), 119-120 (DL), Asn134, and Arg201 each bind S-adenosyl-L-methionine.

It belongs to the class I-like SAM-binding methyltransferase superfamily. Cx-SAM synthase family. As to quaternary structure, homodimer.

The enzyme catalyses prephenate + S-adenosyl-L-methionine = carboxy-S-adenosyl-L-methionine + 3-phenylpyruvate + H2O. Functionally, catalyzes the conversion of S-adenosyl-L-methionine (SAM) to carboxy-S-adenosyl-L-methionine (Cx-SAM). The chain is Carboxy-S-adenosyl-L-methionine synthase from Geobacter metallireducens (strain ATCC 53774 / DSM 7210 / GS-15).